Reading from the N-terminus, the 270-residue chain is 3-methyl-2-oxobutanoate hydroxymethyltransferase (270 aa).

D43 and D82 together coordinate Mg(2+). 3-methyl-2-oxobutanoate contacts are provided by residues 43 to 44 (DS), D82, and K112. Mg(2+) is bound at residue E114. E179 functions as the Proton acceptor in the catalytic mechanism.

This sequence belongs to the PanB family. Homodecamer; pentamer of dimers. Mg(2+) serves as cofactor.

It is found in the cytoplasm. The enzyme catalyses 3-methyl-2-oxobutanoate + (6R)-5,10-methylene-5,6,7,8-tetrahydrofolate + H2O = 2-dehydropantoate + (6S)-5,6,7,8-tetrahydrofolate. It participates in cofactor biosynthesis; (R)-pantothenate biosynthesis; (R)-pantoate from 3-methyl-2-oxobutanoate: step 1/2. Functionally, catalyzes the reversible reaction in which hydroxymethyl group from 5,10-methylenetetrahydrofolate is transferred onto alpha-ketoisovalerate to form ketopantoate. The chain is 3-methyl-2-oxobutanoate hydroxymethyltransferase from Staphylococcus carnosus (strain TM300).